A 711-amino-acid polypeptide reads, in one-letter code: DNA topoisomerase 3 (711 aa).

In terms of domain architecture, Toprim spans 2-135 (KSLILAEKPS…IRRLWISSVT (134 aa)). Glutamate 8 and aspartate 104 together coordinate Mg(2+). In terms of domain architecture, Topo IA-type catalytic spans 152–580 (YNDLYYAALA…EMKDFTKDVV (429 aa)). An interaction with DNA region spans residues 186–191 (SLGRVQ). Residue tyrosine 305 is the O-(5'-phospho-DNA)-tyrosine intermediate of the active site. Residues 691–711 (MNKNEGLDNNPFKDALKNLNL) are disordered.

Belongs to the type IA topoisomerase family. It depends on Mg(2+) as a cofactor.

It catalyses the reaction ATP-independent breakage of single-stranded DNA, followed by passage and rejoining.. Its function is as follows. Releases the supercoiling and torsional tension of DNA, which is introduced during the DNA replication and transcription, by transiently cleaving and rejoining one strand of the DNA duplex. Introduces a single-strand break via transesterification at a target site in duplex DNA. The scissile phosphodiester is attacked by the catalytic tyrosine of the enzyme, resulting in the formation of a DNA-(5'-phosphotyrosyl)-enzyme intermediate and the expulsion of a 3'-OH DNA strand. The free DNA strand then undergoes passage around the unbroken strand, thus removing DNA supercoils. Finally, in the religation step, the DNA 3'-OH attacks the covalent intermediate to expel the active-site tyrosine and restore the DNA phosphodiester backbone. The sequence is that of DNA topoisomerase 3 from Staphylococcus aureus (strain NCTC 8325 / PS 47).